The following is a 103-amino-acid chain: Integration host factor subunit alpha (103 aa).

This sequence belongs to the bacterial histone-like protein family. Heterodimer of an alpha and a beta chain.

Its function is as follows. This protein is one of the two subunits of integration host factor, a specific DNA-binding protein that functions in genetic recombination as well as in transcriptional and translational control. The protein is Integration host factor subunit alpha of Bartonella bacilliformis (strain ATCC 35685 / KC583 / Herrer 020/F12,63).